Here is a 273-residue protein sequence, read N- to C-terminus: Dermonecrotic toxin LarSicTox-alphaIB1aii (273 aa).

His5 is a catalytic residue. 2 residues coordinate Mg(2+): Glu25 and Asp27. The active-site Nucleophile is His41. 2 disulfides stabilise this stretch: Cys45-Cys51 and Cys47-Cys190. Asp85 is a binding site for Mg(2+). A glycan (N-linked (GlcNAc...) asparagine) is linked at Asn250.

It belongs to the arthropod phospholipase D family. Class II subfamily. Mg(2+) serves as cofactor. As to expression, expressed by the venom gland.

The protein resides in the secreted. The enzyme catalyses an N-(acyl)-sphingosylphosphocholine = an N-(acyl)-sphingosyl-1,3-cyclic phosphate + choline. The catalysed reaction is an N-(acyl)-sphingosylphosphoethanolamine = an N-(acyl)-sphingosyl-1,3-cyclic phosphate + ethanolamine. It carries out the reaction a 1-acyl-sn-glycero-3-phosphocholine = a 1-acyl-sn-glycero-2,3-cyclic phosphate + choline. It catalyses the reaction a 1-acyl-sn-glycero-3-phosphoethanolamine = a 1-acyl-sn-glycero-2,3-cyclic phosphate + ethanolamine. Dermonecrotic toxins cleave the phosphodiester linkage between the phosphate and headgroup of certain phospholipids (sphingolipid and lysolipid substrates), forming an alcohol (often choline) and a cyclic phosphate. This toxin acts on sphingomyelin (SM). It may also act on ceramide phosphoethanolamine (CPE), lysophosphatidylcholine (LPC) and lysophosphatidylethanolamine (LPE), but not on lysophosphatidylserine (LPS), and lysophosphatidylglycerol (LPG). It acts by transphosphatidylation, releasing exclusively cyclic phosphate products as second products. Induces dermonecrosis, hemolysis, increased vascular permeability, edema, inflammatory response, and platelet aggregation. The protein is Dermonecrotic toxin LarSicTox-alphaIB1aii of Loxosceles arizonica (Arizona brown spider).